A 544-amino-acid chain; its full sequence is Chaperonin GroEL 1 (544 aa).

Residues 29-32 (TLGP), 86-90 (DGTTT), glycine 413, and aspartate 495 contribute to the ATP site.

This sequence belongs to the chaperonin (HSP60) family. Forms a cylinder of 14 subunits composed of two heptameric rings stacked back-to-back. Interacts with the co-chaperonin GroES.

The protein resides in the cytoplasm. The enzyme catalyses ATP + H2O + a folded polypeptide = ADP + phosphate + an unfolded polypeptide.. Its function is as follows. Together with its co-chaperonin GroES, plays an essential role in assisting protein folding. The GroEL-GroES system forms a nano-cage that allows encapsulation of the non-native substrate proteins and provides a physical environment optimized to promote and accelerate protein folding. This Synechococcus sp. (strain ATCC 27144 / PCC 6301 / SAUG 1402/1) (Anacystis nidulans) protein is Chaperonin GroEL 1.